A 418-amino-acid polypeptide reads, in one-letter code: Pentatricopeptide repeat-containing protein At2g18520, mitochondrial (418 aa).

The transit peptide at M1–F14 directs the protein to the mitochondrion. PPR repeat units follow at residues T101 to R135, T136 to R166, D173 to V207, T208 to L242, D243 to P276, D277 to T311, F312 to P342, and D343 to K373.

This sequence belongs to the PPR family. P subfamily.

It localises to the mitochondrion. This Arabidopsis thaliana (Mouse-ear cress) protein is Pentatricopeptide repeat-containing protein At2g18520, mitochondrial.